Reading from the N-terminus, the 348-residue chain is F-box protein At2g20380 (348 aa).

In terms of domain architecture, F-box spans 14 to 60 (SPESNSLPNDLIVTILARLSQSYYPKLSLVSKTFRAILASPELYQTR).

This chain is F-box protein At2g20380, found in Arabidopsis thaliana (Mouse-ear cress).